We begin with the raw amino-acid sequence, 314 residues long: Olfactory receptor 1E1 (314 aa).

Residues 1–25 (MMGQNQTSISDFLLLGLPIQPEQQN) lie on the Extracellular side of the membrane. N-linked (GlcNAc...) asparagine glycosylation is present at Asn-5. The helical transmembrane segment at 26–49 (LCYALFLAMYLTTLLGNLLIIVLI) threads the bilayer. Residues 50 to 57 (RLDSHLHT) lie on the Cytoplasmic side of the membrane. Residues 58 to 79 (PMYLFLSNLSFSDLCFSSVTIP) form a helical membrane-spanning segment. The Extracellular portion of the chain corresponds to 80–100 (KLLQNMQNQDPSIPYADCLTQ). Cys-97 and Cys-189 are oxidised to a cystine. The chain crosses the membrane as a helical span at residues 101 to 120 (MYFFLLFGDLESFLLVAMAY). Over 121-139 (DRYVAICFPLHYTAIMSPM) the chain is Cytoplasmic. The chain crosses the membrane as a helical span at residues 140 to 158 (LCLSVVALSWVLTTFHAML). Residues 159–195 (HTLLMARLCFCADNVIPHFFCDMSALLKLACSDTRVN) are Extracellular-facing. A helical membrane pass occupies residues 196–219 (EWVIFIMGGLILVIPFLLILGSYA). Residues 220 to 236 (RIVSSILKVPSSKGICK) lie on the Cytoplasmic side of the membrane. Residues 237–259 (ALSTCGSHLSVVSLFYGTVIGLY) traverse the membrane as a helical segment. Topologically, residues 260-272 (LCPSANSSTLKDT) are extracellular. The helical transmembrane segment at 273–292 (VMAMIYTVVTPMLNPFIYSL) threads the bilayer. Over 293-314 (RNRDMKGALSRVIHQKKTFFSL) the chain is Cytoplasmic.

The protein belongs to the G-protein coupled receptor 1 family.

The protein localises to the cell membrane. Its function is as follows. Odorant receptor. The protein is Olfactory receptor 1E1 (OR1E1) of Pan troglodytes (Chimpanzee).